A 192-amino-acid polypeptide reads, in one-letter code: Probable nicotinate-nucleotide adenylyltransferase (192 aa).

Belongs to the NadD family.

The enzyme catalyses nicotinate beta-D-ribonucleotide + ATP + H(+) = deamido-NAD(+) + diphosphate. The protein operates within cofactor biosynthesis; NAD(+) biosynthesis; deamido-NAD(+) from nicotinate D-ribonucleotide: step 1/1. In terms of biological role, catalyzes the reversible adenylation of nicotinate mononucleotide (NaMN) to nicotinic acid adenine dinucleotide (NaAD). In Shouchella clausii (strain KSM-K16) (Alkalihalobacillus clausii), this protein is Probable nicotinate-nucleotide adenylyltransferase.